Reading from the N-terminus, the 251-residue chain is tRNA (guanine-N(7)-)-methyltransferase (251 aa).

The S-adenosyl-L-methionine site is built by Glu-80, Glu-105, Asp-132, and Asp-155. Asp-155 is a catalytic residue. Residues Lys-159, Asp-191, and 228-231 (TKFE) contribute to the substrate site.

Belongs to the class I-like SAM-binding methyltransferase superfamily. TrmB family.

It catalyses the reaction guanosine(46) in tRNA + S-adenosyl-L-methionine = N(7)-methylguanosine(46) in tRNA + S-adenosyl-L-homocysteine. It participates in tRNA modification; N(7)-methylguanine-tRNA biosynthesis. Functionally, catalyzes the formation of N(7)-methylguanine at position 46 (m7G46) in tRNA. The chain is tRNA (guanine-N(7)-)-methyltransferase from Histophilus somni (strain 129Pt) (Haemophilus somnus).